The following is a 347-amino-acid chain: S-adenosylmethionine:tRNA ribosyltransferase-isomerase (347 aa).

Belongs to the QueA family. In terms of assembly, monomer.

The protein resides in the cytoplasm. The catalysed reaction is 7-aminomethyl-7-carbaguanosine(34) in tRNA + S-adenosyl-L-methionine = epoxyqueuosine(34) in tRNA + adenine + L-methionine + 2 H(+). Its pathway is tRNA modification; tRNA-queuosine biosynthesis. Functionally, transfers and isomerizes the ribose moiety from AdoMet to the 7-aminomethyl group of 7-deazaguanine (preQ1-tRNA) to give epoxyqueuosine (oQ-tRNA). The polypeptide is S-adenosylmethionine:tRNA ribosyltransferase-isomerase (Pseudomonas aeruginosa (strain LESB58)).